We begin with the raw amino-acid sequence, 151 residues long: Large ribosomal subunit protein bL9 (151 aa).

The protein belongs to the bacterial ribosomal protein bL9 family.

In terms of biological role, binds to the 23S rRNA. This Lactobacillus delbrueckii subsp. bulgaricus (strain ATCC 11842 / DSM 20081 / BCRC 10696 / JCM 1002 / NBRC 13953 / NCIMB 11778 / NCTC 12712 / WDCM 00102 / Lb 14) protein is Large ribosomal subunit protein bL9.